The following is an 84-amino-acid chain: Acyl carrier protein (84 aa).

The Carrier domain maps to 4–80 (SETFEKVKKI…EAVDYINNQV (77 aa)). Ser40 carries the O-(pantetheine 4'-phosphoryl)serine modification.

This sequence belongs to the acyl carrier protein (ACP) family. 4'-phosphopantetheine is transferred from CoA to a specific serine of apo-ACP by AcpS. This modification is essential for activity because fatty acids are bound in thioester linkage to the sulfhydryl of the prosthetic group.

The protein resides in the cytoplasm. It participates in lipid metabolism; fatty acid biosynthesis. In terms of biological role, carrier of the growing fatty acid chain in fatty acid biosynthesis. This is Acyl carrier protein from Nostoc sp. (strain PCC 7120 / SAG 25.82 / UTEX 2576).